The chain runs to 567 residues: MFS-type transporter poxA (567 aa).

Basic and acidic residues predominate over residues 1–23 (MPASDRTSETGDVEKVTAAETPK). Residues 1-24 (MPASDRTSETGDVEKVTAAETPKE) are disordered. Helical transmembrane passes span 35–55 (ALTGLPLYTVLVGLGLALFLG), 77–97 (ADIGWYGAAYPLTMSSIQLLA), 108–128 (LVFLVFFGLFMLGSLLCGVAV), 141–161 (GAGAAGVLSGTLAIVSAVVPL), 165–185 (SLILGLMMSLVGTAVVLGPVI), 197–217 (WCFYLNLPCGGVTLLALILFF), 240–260 (LAGCLGFIPAVVMLLLALQWG), 271–291 (SATIIGLFCGAGVSLILFLIW), 311–331 (IIASCLYGFALLGGYVVVGYF), and 349–369 (VMLLPNVITNFISKAVIGVIV). A glycan (N-linked (GlcNAc...) asparagine) is linked at N370. 4 helical membrane passes run 372-392 (TGYFNPWLFFGAAVLAIGSGL), 410-430 (ILQGAALGIIQAPTLGVQVAL), 436-456 (LIPVALSLVIFFQYFGSSIML), and 515-535 (AIAGVMWLSTAAALFGFLVSF). The tract at residues 547-567 (EENKKEAAEEEEEVKVAAVEA) is disordered.

The protein belongs to the major facilitator superfamily. TCR/Tet family.

Its subcellular location is the cell membrane. In terms of biological role, MFS-type transporter; part of the gene cluster that mediates the biosynthesis of oxaleimides, cytotoxic compounds containing an unusual disubstituted succinimide moiety. The sequence is that of MFS-type transporter poxA from Penicillium oxalicum (strain 114-2 / CGMCC 5302) (Penicillium decumbens).